The following is a 674-amino-acid chain: U-box domain-containing protein 16 (674 aa).

The U-box domain occupies 273–347 (NIPADFRCPI…VLWCRDQKIP (75 aa)). ARM repeat units follow at residues 399–438 (TVAR…NLSI), 441–481 (QNKT…SLAG), and 484–523 (AYRR…NLVA).

It carries out the reaction S-ubiquitinyl-[E2 ubiquitin-conjugating enzyme]-L-cysteine + [acceptor protein]-L-lysine = [E2 ubiquitin-conjugating enzyme]-L-cysteine + N(6)-ubiquitinyl-[acceptor protein]-L-lysine.. It functions in the pathway protein modification; protein ubiquitination. Its function is as follows. Functions as an E3 ubiquitin ligase. This chain is U-box domain-containing protein 16 (PUB16), found in Arabidopsis thaliana (Mouse-ear cress).